The sequence spans 1659 residues: eIF-2-alpha kinase GCN2 (1659 aa).

Residues 17 to 128 (NELEAIRSIY…SFTQEKLDEF (112 aa)) enclose the RWD domain. A disordered region spans residues 149–170 (KEQLEKEEREKQQETIKKRSDE). Protein kinase domains follow at residues 256–527 (LVKP…MKFL) and 599–981 (FEEI…SGWL). Residues 605-613 (LGQGAFGQV) and Lys-628 contribute to the ATP site. Disordered regions lie at residues 671-691 (NVFE…DFEE) and 727-768 (FENS…VPRR). Ser-761 is subject to Phosphoserine. The active-site Proton acceptor is Asp-835. Phosphothreonine; by autocatalysis occurs at positions 882 and 887. The interval 999-1519 (NPSSPWQQQV…EFKRWDENSS (521 aa)) is histidyl-tRNA synthetase-like.

Belongs to the protein kinase superfamily. Ser/Thr protein kinase family. GCN2 subfamily. As to quaternary structure, homodimer; homodimerization is important for kinase activation by uncharged tRNAs. Interacts (via N-terminal RWD domain) with GCN1 (via N- and C-terminus); this interaction stimulates GCN2 kinase activity in a GCN20-dependent manner in response to amino acid starvation. Interacts (via N-terminus) with the GCN1-GCN20 complex on translating ribosomes in amino acid-starved cells; GCN1 may bind near the ribosomal A-site and promotes the transfer of uncharged tRNAs from the A-site to the tRNA-binding domain in GCN2 for its subsequent kinase activation, and hence allowing GCN4 translational activation and derepression of amino acid biosynthetic genes. Interacts (via C-terminus) with TIF11; this interaction is direct, occurs in amino acid-repleted cells, may be stabilized in a ribosome-dependent manner, reduces GCN2-mediated eIF-2-alpha phosphorylation but not GCN2 autophosphorylation and is lost in amino acid-starved cells and by uncharged tRNAs. Associates (via C-terminus) with ribosomes. Requires Mg(2+) as cofactor. In terms of processing, autophosphorylated, autophosphorylation on Thr-882 and Thr-887 increases kinase activity.

Its subcellular location is the cytoplasm. The catalysed reaction is L-seryl-[protein] + ATP = O-phospho-L-seryl-[protein] + ADP + H(+). The enzyme catalyses L-threonyl-[protein] + ATP = O-phospho-L-threonyl-[protein] + ADP + H(+). The integrated stress response (ISR) is activated in response to conditions that promote ribosome collisions: GCN1, which acts as a ribosome collision sensor, activates GCN2. The RQC pathway and the integrated stress response (ISR) antagonize each other: HEL2 prevents the activation of GCN2, while GCN2 suppresses RQC activation. Ribosome stalling-induced integrated stress response prefers ribosomes with empty A sites. The kinase activity is stimulated upon binding to uncharged tRNAs. Metabolic-stress sensing protein kinase that phosphorylates the alpha subunit of eukaryotic translation initiation factor 2 (eIF-2-alpha/SUI2) on 'Ser-52' in response to low amino acid, carbon, or purine availability. Required for adapatation to nutrient starvation by acting as a key component of the integrated stress response (ISR), by which cells alter their translational and transcriptional output in response to starvation. Converts phosphorylated eIF-2-alpha/SUI2 either to a competitive inhibitor of translation initiation factor eIF-2B, leading to a global protein synthesis repression, and thus to a reduced overall utilization of amino acids, or to a translational initiation activation of specific mRNAs, such as the transcriptional activator GCN4, and hence allowing GCN4-mediated reprogramming of transcription to alleviate nutrient depletion. Binds uncharged tRNAs. Binds to aminoacylated tRNA(Phe) less tightly than to deacylated tRNA(Phe). Binds to double-stranded RNA. This chain is eIF-2-alpha kinase GCN2, found in Saccharomyces cerevisiae (strain ATCC 204508 / S288c) (Baker's yeast).